Here is a 369-residue protein sequence, read N- to C-terminus: C-C chemokine receptor type 9 (369 aa).

Residues 1-48 (MMPTELTSLIPGMFDDFSYDSTASTDDYMNLNFSSFFCKKNNVRQFAS) are Extracellular-facing. Residue asparagine 32 is glycosylated (N-linked (GlcNAc...) asparagine). 2 disulfides stabilise this stretch: cysteine 38-cysteine 289 and cysteine 119-cysteine 198. Residues 49–74 (HFLPPLYWLVFIVGTLGNSLVILVYW) form a helical membrane-spanning segment. Over 75–85 (YCTRVKTMTDM) the chain is Cytoplasmic. A helical membrane pass occupies residues 86–109 (FLLNLAIADLLFLATLPFWAIAAA). Residues 110 to 120 (GQWMFQTFMCK) are Extracellular-facing. Residues 121-150 (VVNSMYKMNFYSCVLLIMCISVDRYIAIVQ) form a helical membrane-spanning segment. Topologically, residues 151 to 159 (AMKAQVWRQ) are cytoplasmic. Residues 160 to 185 (KRLLYSKMVCITIWVMAAVLCTPEIL) traverse the membrane as a helical segment. The Extracellular segment spans residues 186–208 (YSQVSGESGIATCTMVYPKDKNA). Residues 209–243 (KLKSAVLILKVTLGFFLPFMVMAFCYTIIIHTLVQ) form a helical membrane-spanning segment. Topologically, residues 244–248 (AKKSS) are cytoplasmic. A helical membrane pass occupies residues 249-283 (KHKALKVTITVLTVFIMSQFPYNSILVVQAVDAYA). The Extracellular portion of the chain corresponds to 284 to 290 (MFISNCT). The chain crosses the membrane as a helical span at residues 291–321 (ISTNIDICFQVTQTIAFFHSCLNPVLYVFVG). Over 322-369 (ERFRRDLVKTLKNLGCISQAQWVSFTRREGSLKLSSMLLETTSGALSL) the chain is Cytoplasmic.

This sequence belongs to the G-protein coupled receptor 1 family. Highly expressed in the thymus and low in lymph nodes and spleen.

The protein localises to the cell membrane. In terms of biological role, receptor for chemokine SCYA25/TECK. Subsequently transduces a signal by increasing the intracellular calcium ions level. The chain is C-C chemokine receptor type 9 (Ccr9) from Mus musculus (Mouse).